We begin with the raw amino-acid sequence, 197 residues long: Outer membrane protein 26 (197 aa).

The first 23 residues, Met1–Ala23, serve as a signal peptide directing secretion.

This sequence belongs to the Skp family.

It localises to the cell outer membrane. In Haemophilus influenzae (strain ATCC 51907 / DSM 11121 / KW20 / Rd), this protein is Outer membrane protein 26 (omp26).